The chain runs to 884 residues: E3 SUMO-protein ligase SIZ1 (884 aa).

One can recognise an SAP domain in the interval 11 to 45 (LSYFRIKELKDVLTQLGLSKQGKKQELVDRILTLL). The segment at 84–103 (LASKGQVSSDTSNLKVKGEP) is disordered. Positions 88–97 (GQVSSDTSNL) are enriched in polar residues. Residue lysine 100 forms a Glycyl lysine isopeptide (Lys-Gly) (interchain with G-Cter in SUMO) linkage. Residues 112-168 (KVRCVCGNSLETDSMIQCEDPRCHVWQHVGCVILPDKPMDGNPPLPESFYCEICRLT) form a PHD-type zinc finger. Residues 346 to 429 (SDSDIEVVAD…FNRITSKMKH (84 aa)) form an SP-RING-type zinc finger. Zn(2+) contacts are provided by cysteine 379, histidine 381, cysteine 402, and cysteine 405. Lysine 488 participates in a covalent cross-link: Glycyl lysine isopeptide (Lys-Gly) (interchain with G-Cter in SUMO). 3 disordered regions span residues 753–778 (PSLQIFLPTKPDASAQSGFKNQADMS), 792–824 (GDSASGNHGDPATTNGINSSHQMSTREGSMDTT), and 836–869 (DSRQDKAKKQRSDNPFSFPRQKRSNNEQDHQTRH). Composition is skewed to polar residues over residues 766-778 (SAQSGFKNQADMS) and 803-824 (ATTNGINSSHQMSTREGSMDTT). Residues 837 to 847 (SRQDKAKKQRS) show a composition bias toward basic and acidic residues.

The protein belongs to the PIAS family. Interacts (via PHD domain) with SCE1, GTE3 and GTE5. Autosumoylated at Lys-100 and Lys-488. In terms of tissue distribution, ubiquitous.

The protein resides in the nucleus speckle. The protein operates within protein modification; protein sumoylation. In terms of biological role, E3 SUMO protein ligase involved in regulation processes. Mediates SUMO/ attachment to PHR1, a MYB transcriptional activator controlling the phosphate deficiency responses. Functions as an upstream negative regulator of salicylic acid (SA) accumulation and subsequent SA-mediated systemic acquired resistance (SAR) signaling. Probably not involved in jasmonic acid (JA)-mediated defense response. Participates in abiotic stress-induced sumoylation. Controls heat shock-induced SUMO1 and SUMO2 conjugation and facilitates basal thermotolerance. Involved in freezing tolerance by mediating sumoylation of ICE1, a transcription activator of the cold signaling regulator CBF3/DREB1A. Acts as a positive regulator of drought stress tolerance. Acts as a floral repressor that promotes FLC expression by repressing FLD activity through sumoylation. Acts as a negative regulator of abscisic acid (ABA) signaling through ABI5 sumoylation. Mediates sumoylation of SCE1, GTE3 and GTE5. Functions as a negative regulator of SnRK1 signaling through sumoylation of several components of the SnRK1 complex. The polypeptide is E3 SUMO-protein ligase SIZ1 (Arabidopsis thaliana (Mouse-ear cress)).